We begin with the raw amino-acid sequence, 493 residues long: MITRPIAHTTAGDLGGCLEDGLYVFRGVPYAEPPVGDLRWRAARPHAGWTGVRDASAYGPSAPQPVEPGGSPILGTHGDPPFDEDCLTLNLWTPNLDGGSRPVLVWIHGGGLLTGSGNLPNYATDTFARDGDLVGISINYRLGPLGFLAGMGDENVWLTDQVEALRWIADNVAAFGGDPNRITLVGQSGGAYSIAALAQHPVARQLFHRAILQSPPFGMQPHTVEESTARTKALARHLGHDDIEALRHEPWERLIQGTIGVLMEHTKFGEWPLAFYPVFDEATIPRHPIESIIDSDIEIIIGWTRDEGTFPFAFDPQVSQADRDQVESWLQKRFGDHAASAYEAHAGDGTSPWTVIANVVGDELFHSAGYRVADERATRRPVRAYQFDVVSPLSDGALGAVHCIEMPFTFANLDRWTGKPFVDGLDPDVVARVTNVLHQAWIAFVRTGDPTHDQLPVWPTFRADDPAVLVVGDEGAEVARDLARPDHVSVRTL.

The active-site Acyl-ester intermediate is S188. Active-site charge relay system residues include E307 and H402.

It belongs to the type-B carboxylesterase/lipase family. In terms of assembly, monomer.

Its function is as follows. May degrade the phenylcarbamate herbicides phenmedipham and desmedipham cometabolically by hydrolyzing their central carbamate linkages. Conveys resistance to the herbicide phenmedipham. In Pseudarthrobacter oxydans (Arthrobacter oxydans), this protein is Phenmedipham hydrolase (pcd).